We begin with the raw amino-acid sequence, 368 residues long: Phospho-N-acetylmuramoyl-pentapeptide-transferase (368 aa).

9 consecutive transmembrane segments (helical) span residues 30–50, 72–92, 95–115, 139–159, 169–189, 208–228, 238–258, 264–286, and 345–365; these read AAAITALLITLFVGPGFIKYL, LPTMGGLLIIFSIEISVLLWS, IDPHVWLIMLAILWMGIIGFI, VTLGLVVGCYTWYDPSFSVLL, YLTIDYGYFYIPIVIFIITAV, AIVVMGLGGFSYLAGNAVYAV, GGEIAVVSMAIVMACVGFLWF, EIIMGDTGSLALGSAIAVIALLI, and KIVIRFWILTILFFLASLMTL.

The protein belongs to the glycosyltransferase 4 family. MraY subfamily. The cofactor is Mg(2+).

It localises to the cell inner membrane. It catalyses the reaction UDP-N-acetyl-alpha-D-muramoyl-L-alanyl-gamma-D-glutamyl-meso-2,6-diaminopimeloyl-D-alanyl-D-alanine + di-trans,octa-cis-undecaprenyl phosphate = di-trans,octa-cis-undecaprenyl diphospho-N-acetyl-alpha-D-muramoyl-L-alanyl-D-glutamyl-meso-2,6-diaminopimeloyl-D-alanyl-D-alanine + UMP. Its pathway is cell wall biogenesis; peptidoglycan biosynthesis. Functionally, catalyzes the initial step of the lipid cycle reactions in the biosynthesis of the cell wall peptidoglycan: transfers peptidoglycan precursor phospho-MurNAc-pentapeptide from UDP-MurNAc-pentapeptide onto the lipid carrier undecaprenyl phosphate, yielding undecaprenyl-pyrophosphoryl-MurNAc-pentapeptide, known as lipid I. The sequence is that of Phospho-N-acetylmuramoyl-pentapeptide-transferase from Pelodictyon phaeoclathratiforme (strain DSM 5477 / BU-1).